Here is a 363-residue protein sequence, read N- to C-terminus: NADH-quinone oxidoreductase subunit H (363 aa).

Transmembrane regions (helical) follow at residues 62–82 (GPMY…KLLF), 94–114 (AIFV…WAVV), 127–147 (VGLL…ILAG), 166–186 (VVSY…AAGS), 202–222 (FFDW…VSGV), 239–257 (IVAG…LFFL), 264–286 (ILVS…QGWV), 293–313 (LIDW…LFFA), and 339–359 (FIPL…SGVI).

The protein belongs to the complex I subunit 1 family. In terms of assembly, NDH-1 is composed of 14 different subunits. Subunits NuoA, H, J, K, L, M, N constitute the membrane sector of the complex.

It is found in the cell inner membrane. The catalysed reaction is a quinone + NADH + 5 H(+)(in) = a quinol + NAD(+) + 4 H(+)(out). NDH-1 shuttles electrons from NADH, via FMN and iron-sulfur (Fe-S) centers, to quinones in the respiratory chain. The immediate electron acceptor for the enzyme in this species is believed to be ubiquinone. Couples the redox reaction to proton translocation (for every two electrons transferred, four hydrogen ions are translocated across the cytoplasmic membrane), and thus conserves the redox energy in a proton gradient. This subunit may bind ubiquinone. The chain is NADH-quinone oxidoreductase subunit H from Xylella fastidiosa (strain 9a5c).